The primary structure comprises 485 residues: Ras-like GTPase YcjX (485 aa).

The Walker A motif signature appears at 33–40 (GLSGAGKT). GTP-binding residues include Ser35, Gly36, Gly38, Lys39, Thr40, Ala41, Trp110, Ser113, Thr114, Arg115, Lys355, Asp357, and His358. GDP contacts are provided by Gly36, Gly38, Lys39, Thr40, Ala41, Trp110, Ser113, and Thr114. GDP-binding residues include Lys355, Asp357, His358, Ser395, Ala396, and Ile397. Ile397 provides a ligand contact to GTP.

Monomer in solution. Requires Mg(2+) as cofactor.

The enzyme catalyses GTP + H2O = GDP + phosphate + H(+). Alternates between an inactive form bound to GDP and an active form bound to GTP. Likely activated by a guanine nucleotide-exchange factor (GEF). Binds GTP and GDP. Has intrinsic GTPase activity. Does not hydrolyze ATP. May act as a transducer of stress responses. The protein is Ras-like GTPase YcjX of Shewanella oneidensis (strain ATCC 700550 / JCM 31522 / CIP 106686 / LMG 19005 / NCIMB 14063 / MR-1).